The following is a 609-amino-acid chain: DNA mismatch repair protein MutL (609 aa).

It belongs to the DNA mismatch repair MutL/HexB family.

In terms of biological role, this protein is involved in the repair of mismatches in DNA. It is required for dam-dependent methyl-directed DNA mismatch repair. May act as a 'molecular matchmaker', a protein that promotes the formation of a stable complex between two or more DNA-binding proteins in an ATP-dependent manner without itself being part of a final effector complex. The sequence is that of DNA mismatch repair protein MutL from Rickettsia felis (strain ATCC VR-1525 / URRWXCal2) (Rickettsia azadi).